Reading from the N-terminus, the 395-residue chain is Phosphopentomutase (395 aa).

Positions 14, 286, 291, 327, 328, and 339 each coordinate Mn(2+).

Belongs to the phosphopentomutase family. The cofactor is Mn(2+).

The protein resides in the cytoplasm. The enzyme catalyses 2-deoxy-alpha-D-ribose 1-phosphate = 2-deoxy-D-ribose 5-phosphate. It carries out the reaction alpha-D-ribose 1-phosphate = D-ribose 5-phosphate. It functions in the pathway carbohydrate degradation; 2-deoxy-D-ribose 1-phosphate degradation; D-glyceraldehyde 3-phosphate and acetaldehyde from 2-deoxy-alpha-D-ribose 1-phosphate: step 1/2. Isomerase that catalyzes the conversion of deoxy-ribose 1-phosphate (dRib-1-P) and ribose 1-phosphate (Rib-1-P) to deoxy-ribose 5-phosphate (dRib-5-P) and ribose 5-phosphate (Rib-5-P), respectively. The polypeptide is Phosphopentomutase (Staphylococcus haemolyticus (strain JCSC1435)).